The chain runs to 208 residues: Mediator of RNA polymerase II transcription subunit 18 (208 aa).

The protein belongs to the Mediator complex subunit 18 family. As to quaternary structure, component of the Mediator complex.

It localises to the nucleus. Component of the Mediator complex, a coactivator involved in the regulated transcription of nearly all RNA polymerase II-dependent genes. Mediator functions as a bridge to convey information from gene-specific regulatory proteins to the basal RNA polymerase II transcription machinery. Mediator is recruited to promoters by direct interactions with regulatory proteins and serves as a scaffold for the assembly of a functional preinitiation complex with RNA polymerase II and the general transcription factors. The protein is Mediator of RNA polymerase II transcription subunit 18 (med18) of Xenopus laevis (African clawed frog).